The primary structure comprises 196 residues: DnaA initiator-associating protein DiaA (196 aa).

The SIS domain occupies Leu34 to Asp196.

The protein belongs to the SIS family. DiaA subfamily. As to quaternary structure, homotetramer; dimer of dimers.

Its function is as follows. Required for the timely initiation of chromosomal replication via direct interactions with the DnaA initiator protein. This Yersinia pseudotuberculosis serotype O:1b (strain IP 31758) protein is DnaA initiator-associating protein DiaA.